We begin with the raw amino-acid sequence, 107 residues long: Rhodocoxin (107 aa).

The 2Fe-2S ferredoxin-type domain maps to Pro-2–Gln-106. The [2Fe-2S] cluster site is built by Cys-40, Cys-46, Cys-49, and Cys-87.

This sequence belongs to the adrenodoxin/putidaredoxin family. The cofactor is [2Fe-2S] cluster.

Functionally, ferredoxin-type protein which transfers electrons from rhodocoxin reductase to cytochrome CYP116 (ThcB), which is involved in the degradation of thiocarbamate herbicides. The sequence is that of Rhodocoxin (thcC) from Rhodococcus erythropolis (Arthrobacter picolinophilus).